We begin with the raw amino-acid sequence, 136 residues long: Ribosome-binding factor A (136 aa).

The protein belongs to the RbfA family. Monomer. Binds 30S ribosomal subunits, but not 50S ribosomal subunits or 70S ribosomes.

The protein resides in the cytoplasm. In terms of biological role, one of several proteins that assist in the late maturation steps of the functional core of the 30S ribosomal subunit. Associates with free 30S ribosomal subunits (but not with 30S subunits that are part of 70S ribosomes or polysomes). Required for efficient processing of 16S rRNA. May interact with the 5'-terminal helix region of 16S rRNA. The sequence is that of Ribosome-binding factor A from Yersinia enterocolitica serotype O:8 / biotype 1B (strain NCTC 13174 / 8081).